Here is a 173-residue protein sequence, read N- to C-terminus: Glycine cleavage system H protein, mitochondrial (173 aa).

A mitochondrion-targeting transit peptide spans 1–48 (MALRAVRSVRAAVGGLRAISAPSAPCLPRPWGLRAGAVRELRTGPALL). Residues 66 to 148 (VGTVGISNFA…YEDGWLIKMT (83 aa)) enclose the Lipoyl-binding domain. N6-lipoyllysine is present on Lys107.

This sequence belongs to the GcvH family. Interacts with GLDC. The glycine cleavage system is composed of four proteins: P (GLDC), T (GCST), L (DLD) and H (GCSH). It depends on (R)-lipoate as a cofactor.

It is found in the mitochondrion. In terms of biological role, the glycine cleavage system catalyzes the degradation of glycine. The H protein (GCSH) shuttles the methylamine group of glycine from the P protein (GLDC) to the T protein (GCST). Has a pivotal role in the lipoylation of enzymes involved in cellular energetics such as the mitochondrial dihydrolipoyllysine-residue acetyltransferase component of pyruvate dehydrogenase complex (DLAT), and the mitochondrial dihydrolipoyllysine-residue succinyltransferase component of 2-oxoglutarate dehydrogenase complex (DLST). The polypeptide is Glycine cleavage system H protein, mitochondrial (Bos taurus (Bovine)).